The sequence spans 520 residues: 2-isopropylmalate synthase (520 aa).

In terms of domain architecture, Pyruvate carboxyltransferase spans 12 to 274 (IRIFDTTLRD…DSAINTPRIV (263 aa)). Residues D21, H209, H211, and N245 each contribute to the Mn(2+) site. A regulatory domain region spans residues 396-520 (RLASMTISDV…VVAGKTAAVA (125 aa)).

This sequence belongs to the alpha-IPM synthase/homocitrate synthase family. LeuA type 1 subfamily. In terms of assembly, homodimer. The cofactor is Mn(2+).

It localises to the cytoplasm. The enzyme catalyses 3-methyl-2-oxobutanoate + acetyl-CoA + H2O = (2S)-2-isopropylmalate + CoA + H(+). It participates in amino-acid biosynthesis; L-leucine biosynthesis; L-leucine from 3-methyl-2-oxobutanoate: step 1/4. Catalyzes the condensation of the acetyl group of acetyl-CoA with 3-methyl-2-oxobutanoate (2-ketoisovalerate) to form 3-carboxy-3-hydroxy-4-methylpentanoate (2-isopropylmalate). In Xanthomonas axonopodis pv. citri (strain 306), this protein is 2-isopropylmalate synthase.